A 654-amino-acid chain; its full sequence is DNA ligase (654 aa).

NAD(+) contacts are provided by residues 37–41, 86–87, and Glu-113; these read DEEYD and SM. Lys-115 acts as the N6-AMP-lysine intermediate in catalysis. Positions 136, 170, and 308 each coordinate NAD(+). Cys-402, Cys-405, Cys-418, and Cys-423 together coordinate Zn(2+). Positions 576–654 constitute a BRCT domain; the sequence is ITQNAFSGKS…GEFERLKLEI (79 aa).

The protein belongs to the NAD-dependent DNA ligase family. LigA subfamily. It depends on Mg(2+) as a cofactor. The cofactor is Mn(2+).

The enzyme catalyses NAD(+) + (deoxyribonucleotide)n-3'-hydroxyl + 5'-phospho-(deoxyribonucleotide)m = (deoxyribonucleotide)n+m + AMP + beta-nicotinamide D-nucleotide.. Functionally, DNA ligase that catalyzes the formation of phosphodiester linkages between 5'-phosphoryl and 3'-hydroxyl groups in double-stranded DNA using NAD as a coenzyme and as the energy source for the reaction. It is essential for DNA replication and repair of damaged DNA. This chain is DNA ligase, found in Campylobacter curvus (strain 525.92).